The chain runs to 213 residues: Ribonuclease HII (213 aa).

The 213-residue stretch at 1–213 (MKIIGIDEAG…SWKTAQKFIQ (213 aa)) folds into the RNase H type-2 domain. The a divalent metal cation site is built by aspartate 7, glutamate 8, and aspartate 105.

This sequence belongs to the RNase HII family. Mn(2+) is required as a cofactor. The cofactor is Mg(2+).

Its subcellular location is the cytoplasm. It carries out the reaction Endonucleolytic cleavage to 5'-phosphomonoester.. Functionally, endonuclease that specifically degrades the RNA of RNA-DNA hybrids. The polypeptide is Ribonuclease HII (Methanococcoides burtonii (strain DSM 6242 / NBRC 107633 / OCM 468 / ACE-M)).